Reading from the N-terminus, the 104-residue chain is NADH-quinone oxidoreductase subunit K (104 aa).

The next 3 membrane-spanning stretches (helical) occupy residues 4 to 24, 31 to 51, and 67 to 87; these read VPAS…LFGA, VIVL…LVAF, and LFTM…LIAL.

This sequence belongs to the complex I subunit 4L family. NDH-1 is composed of 14 different subunits. Subunits NuoA, H, J, K, L, M, N constitute the membrane sector of the complex.

The protein resides in the cell membrane. The catalysed reaction is a quinone + NADH + 5 H(+)(in) = a quinol + NAD(+) + 4 H(+)(out). In terms of biological role, NDH-1 shuttles electrons from NADH, via FMN and iron-sulfur (Fe-S) centers, to quinones in the respiratory chain. The immediate electron acceptor for the enzyme in this species is believed to be a menaquinone. Couples the redox reaction to proton translocation (for every two electrons transferred, four hydrogen ions are translocated across the cytoplasmic membrane), and thus conserves the redox energy in a proton gradient. The protein is NADH-quinone oxidoreductase subunit K of Bacillus cereus (strain AH187).